A 58-amino-acid chain; its full sequence is Small ribosomal subunit protein bS21 (58 aa).

It belongs to the bacterial ribosomal protein bS21 family.

The protein is Small ribosomal subunit protein bS21 of Prochlorococcus marinus (strain MIT 9515).